The primary structure comprises 239 residues: 1-(5-phosphoribosyl)-5-[(5-phosphoribosylamino)methylideneamino] imidazole-4-carboxamide isomerase (239 aa).

D12 acts as the Proton acceptor in catalysis. The active-site Proton donor is the D133.

Belongs to the HisA/HisF family.

It is found in the cytoplasm. The enzyme catalyses 1-(5-phospho-beta-D-ribosyl)-5-[(5-phospho-beta-D-ribosylamino)methylideneamino]imidazole-4-carboxamide = 5-[(5-phospho-1-deoxy-D-ribulos-1-ylimino)methylamino]-1-(5-phospho-beta-D-ribosyl)imidazole-4-carboxamide. It participates in amino-acid biosynthesis; L-histidine biosynthesis; L-histidine from 5-phospho-alpha-D-ribose 1-diphosphate: step 4/9. The sequence is that of 1-(5-phosphoribosyl)-5-[(5-phosphoribosylamino)methylideneamino] imidazole-4-carboxamide isomerase from Sulfurihydrogenibium sp. (strain YO3AOP1).